A 1209-amino-acid chain; its full sequence is ATP-dependent helicase/nuclease subunit A (1209 aa).

The 474-residue stretch at 9–482 (SQWTDEQWQA…IDLAKNFRSR (474 aa)) folds into the UvrD-like helicase ATP-binding domain. 30–37 (AAAGSGKT) contacts ATP. The region spanning 510–798 (AALRFGAQDY…RMMTIHKSKG (289 aa)) is the UvrD-like helicase C-terminal domain.

The protein belongs to the helicase family. AddA subfamily. As to quaternary structure, heterodimer of AddA and AddB/RexB. Mg(2+) is required as a cofactor.

It catalyses the reaction Couples ATP hydrolysis with the unwinding of duplex DNA by translocating in the 3'-5' direction.. The enzyme catalyses ATP + H2O = ADP + phosphate + H(+). Its function is as follows. The heterodimer acts as both an ATP-dependent DNA helicase and an ATP-dependent, dual-direction single-stranded exonuclease. Recognizes the chi site generating a DNA molecule suitable for the initiation of homologous recombination. The AddA nuclease domain is required for chi fragment generation; this subunit has the helicase and 3' -&gt; 5' nuclease activities. The polypeptide is ATP-dependent helicase/nuclease subunit A (Anoxybacillus flavithermus (strain DSM 21510 / WK1)).